We begin with the raw amino-acid sequence, 551 residues long: Tetrachloroethene reductive dehalogenase (551 aa).

A signal peptide (tat-type signal) is located at residues 1-39; sequence MGEINRRNFLKASMLGAAAAAVASASAVKGMVSPLVADA. The region spanning 411 to 440 is the 4Fe-4S ferredoxin-type 1 domain; the sequence is PRKFGVREFCRLCKKCADACPAQAISHEKD. [4Fe-4S] cluster-binding residues include C420, C423, C426, C430, C467, C478, C481, and C485. Positions 478-496 constitute a 4Fe-4S ferredoxin-type 2 domain; the sequence is CANCVAVCSWNKVETWNHD.

It belongs to the PceA family. As to quaternary structure, monomer. The cofactor is [4Fe-4S] cluster. Requires corrinoid as cofactor. In terms of processing, predicted to be exported by the Tat system. The position of the signal peptide cleavage has been experimentally proven.

It is found in the cell membrane. The enzyme catalyses trichloroethene + chloride + A + H(+) = tetrachloroethene + AH2. It catalyses the reaction trichloroethene + AH2 = (Z)-1,2-dichloroethene + chloride + A + H(+). Activity is inhibited by ammonium ions. Photoreversibly inactivated by 1-iodopropane. Its function is as follows. Catalyzes the reductive dechlorination of tetrachloroethene (PCE) to trichloroethene (TCE) and of trichloroethene to cis-1,2-dichloroethene (DCE). Can also use trichlorofluoroethene, tetrachloromethane, hexachloroethane, tetrachloroethane, trichloroethane and 1,1,1-trichloro-2,2,2-trifluoroethane. Menaquinone can act as the electron donor. Reduced methyl viologen can act as the artificial electron donor. This Dehalobacter restrictus (strain DSM 9455 / PER-K23) protein is Tetrachloroethene reductive dehalogenase.